The primary structure comprises 545 residues: Glucose-6-phosphate isomerase (545 aa).

E351 (proton donor) is an active-site residue. Residues H382 and K510 contribute to the active site.

This sequence belongs to the GPI family.

The protein resides in the cytoplasm. The catalysed reaction is alpha-D-glucose 6-phosphate = beta-D-fructose 6-phosphate. Its pathway is carbohydrate biosynthesis; gluconeogenesis. It participates in carbohydrate degradation; glycolysis; D-glyceraldehyde 3-phosphate and glycerone phosphate from D-glucose: step 2/4. Functionally, catalyzes the reversible isomerization of glucose-6-phosphate to fructose-6-phosphate. This chain is Glucose-6-phosphate isomerase, found in Shewanella woodyi (strain ATCC 51908 / MS32).